The chain runs to 280 residues: 2,3,4,5-tetrahydropyridine-2,6-dicarboxylate N-succinyltransferase (280 aa).

Substrate is bound by residues Arg-109 and Asp-146.

The protein belongs to the transferase hexapeptide repeat family. Homotrimer.

The protein resides in the cytoplasm. The enzyme catalyses (S)-2,3,4,5-tetrahydrodipicolinate + succinyl-CoA + H2O = (S)-2-succinylamino-6-oxoheptanedioate + CoA. It functions in the pathway amino-acid biosynthesis; L-lysine biosynthesis via DAP pathway; LL-2,6-diaminopimelate from (S)-tetrahydrodipicolinate (succinylase route): step 1/3. This is 2,3,4,5-tetrahydropyridine-2,6-dicarboxylate N-succinyltransferase from Blochmanniella floridana.